Reading from the N-terminus, the 550-residue chain is Arginine--tRNA ligase (550 aa).

Residues 130-140 (ANPTGPIHIGG) carry the 'HIGH' region motif.

Belongs to the class-I aminoacyl-tRNA synthetase family. As to quaternary structure, monomer.

The protein resides in the cytoplasm. It catalyses the reaction tRNA(Arg) + L-arginine + ATP = L-arginyl-tRNA(Arg) + AMP + diphosphate. This Mycobacterium sp. (strain KMS) protein is Arginine--tRNA ligase.